Reading from the N-terminus, the 153-residue chain is Regulatory protein RecX (153 aa).

It belongs to the RecX family.

It localises to the cytoplasm. Its function is as follows. Modulates RecA activity. This is Regulatory protein RecX from Vibrio vulnificus (strain CMCP6).